The chain runs to 350 residues: Induced myeloid leukemia cell differentiation protein Mcl-1 homolog (350 aa).

Residues lysine 5 and lysine 40 each participate in a glycyl lysine isopeptide (Lys-Gly) (interchain with G-Cter in ubiquitin) cross-link. The PEST-like stretch occupies residues 104–175 (CASPPEEMEG…PAEEEEDELF (72 aa)). Serine 121 is subject to Phosphoserine. Residue lysine 136 forms a Glycyl lysine isopeptide (Lys-Gly) (interchain with G-Cter in ubiquitin) linkage. The interval 148–170 (GEASSGPGTDGSLPSTPPPAEEE) is disordered. Serine 159 bears the Phosphoserine; by GSK3-alpha and GSK3-beta mark. Serine 162 carries the post-translational modification Phosphoserine. Threonine 163 carries the post-translational modification Phosphothreonine; by MAPK. Residues lysine 194 and lysine 197 each participate in a glycyl lysine isopeptide (Lys-Gly) (interchain with G-Cter in ubiquitin) cross-link. The BH3 motif lies at 209–223 (ALETLRRVGDGVQRN). Positions 252–272 (HVFSDGVTNWGRIVTLISFGA) match the BH1 motif. The BH2 motif lies at 304-319 (DWLVKQRGWDGFVEFF). The helical transmembrane segment at 328–348 (IRNVLLAFAGVAGVGAGLAYL) threads the bilayer.

This sequence belongs to the Bcl-2 family. In terms of assembly, interacts with HIF3A (via C-terminus domain). Interacts with BOK, BIK, BAX, BAK1, and TPT1. Interacts with unphosphorylated BAD. Interacts with BMF, BBC3 and PMAIP1. Interacts with BOP. Interacts with BCL2L11; may sequester BCL2L11 to prevent its pro-apoptotic activity. Interacts with GIMAP5 and HSPA8/HSC70; the interaction between HSPA8 and MCL1 is impaired in the absence of GIMAP5. Post-translationally, cleaved by CASP3 during apoptosis, yielding a pro-apoptotic C-terminal fragment. In terms of processing, rapidly degraded in the absence of phosphorylation in the PEST region. Phosphorylated on Ser-159, by GSK3, in response to IL3/interleukin-3 withdrawal. Phosphorylation at Ser-159 induces ubiquitination and proteasomal degradation, abrogating the anti-apoptotic activity. Treatment with taxol or okadaic acid induces phosphorylation on additional sites. Post-translationally, ubiquitinated. Ubiquitination is induced by phosphorylation at Ser-159. Deubiquitinated by USP20; leading to increased stability.

Its subcellular location is the membrane. It is found in the cytoplasm. The protein resides in the mitochondrion. It localises to the nucleus. The protein localises to the nucleoplasm. In terms of biological role, involved in the regulation of apoptosis versus cell survival, and in the maintenance of viability but not of proliferation. Mediates its effects by interactions with a number of other regulators of apoptosis. This chain is Induced myeloid leukemia cell differentiation protein Mcl-1 homolog (MCL1), found in Felis catus (Cat).